The sequence spans 251 residues: NADPH-dependent oxidoreductase (251 aa).

Belongs to the flavin oxidoreductase frp family. FMN serves as cofactor.

Reduces FMN, organic nitro compounds and disulfide DTNB. Involved in maintenance of the cellular redox state and the disulfide stress response. The polypeptide is NADPH-dependent oxidoreductase (nfrA) (Staphylococcus saprophyticus subsp. saprophyticus (strain ATCC 15305 / DSM 20229 / NCIMB 8711 / NCTC 7292 / S-41)).